A 358-amino-acid chain; its full sequence is Methionine import ATP-binding protein MetN (358 aa).

Positions 14–255 (VVFDAVSKRF…SRHETTRALL (242 aa)) constitute an ABC transporter domain. 52–59 (GRSGAGKS) is a binding site for ATP.

The protein belongs to the ABC transporter superfamily. Methionine importer (TC 3.A.1.24) family. The complex is composed of two ATP-binding proteins (MetN), two transmembrane proteins (MetI) and a solute-binding protein (MetQ).

It is found in the cell inner membrane. The enzyme catalyses L-methionine(out) + ATP + H2O = L-methionine(in) + ADP + phosphate + H(+). The catalysed reaction is D-methionine(out) + ATP + H2O = D-methionine(in) + ADP + phosphate + H(+). Part of the ABC transporter complex MetNIQ involved in methionine import. Responsible for energy coupling to the transport system. The chain is Methionine import ATP-binding protein MetN from Rhizobium meliloti (strain 1021) (Ensifer meliloti).